A 235-amino-acid polypeptide reads, in one-letter code: Pro-opiomelanocortin (235 aa).

Residues 1 to 26 (MPRFCNSRSGALLLALLLQTSIDVWS) form the signal peptide. Phe87 carries the phenylalanine amide modification. A disordered region spans residues 88–128 (GPRNSSSAGGSAQRRAEEETAGGDGRPEPSPREGKRSYSME). A compositionally biased stretch (basic and acidic residues) spans 112–128 (GRPEPSPREGKRSYSME). Position 124 is an N-acetylserine; in Corticotropin (Ser124). Val136 is modified (valine amide). Asn152 is a glycosylation site (N-linked (GlcNAc...) asparagine). Ser154 bears the Phosphoserine mark. The interval 169-209 (EQPDGLEQVLEPDTEKADGPYRVEHFRWGNPPKDKRYGGFM) is disordered. A compositionally biased stretch (basic and acidic residues) spans 181-205 (DTEKADGPYRVEHFRWGNPPKDKRY).

It belongs to the POMC family. Post-translationally, specific enzymatic cleavages at paired basic residues yield the different active peptides. In terms of tissue distribution, ACTH and MSH are produced by the pituitary gland.

It localises to the secreted. Its function is as follows. Stimulates the adrenal glands to release cortisol. Functionally, anorexigenic peptide. Increases the pigmentation of skin by increasing melanin production in melanocytes. In terms of biological role, increases the pigmentation of skin by increasing melanin production in melanocytes. Endogenous orexigenic opiate. Its function is as follows. Endogenous opiate. In Rattus norvegicus (Rat), this protein is Pro-opiomelanocortin (Pomc).